The following is a 459-amino-acid chain: UDP-N-acetylglucosamine 1-carboxyvinyltransferase (459 aa).

Residue 40–41 coordinates phosphoenolpyruvate; the sequence is KN. Arginine 111 is a UDP-N-acetyl-alpha-D-glucosamine binding site. Cysteine 135 acts as the Proton donor in catalysis. Cysteine 135 carries the post-translational modification 2-(S-cysteinyl)pyruvic acid O-phosphothioketal. UDP-N-acetyl-alpha-D-glucosamine-binding positions include 140–144, aspartate 324, and valine 346; that span reads RPVDL. Residues 437–459 form a disordered region; that stretch reads PSAPPSEVSSAVAAGPDAAAAPV. The span at 441–459 shows a compositional bias: low complexity; sequence PSEVSSAVAAGPDAAAAPV.

The protein belongs to the EPSP synthase family. MurA subfamily.

It localises to the cytoplasm. The enzyme catalyses phosphoenolpyruvate + UDP-N-acetyl-alpha-D-glucosamine = UDP-N-acetyl-3-O-(1-carboxyvinyl)-alpha-D-glucosamine + phosphate. It participates in cell wall biogenesis; peptidoglycan biosynthesis. Functionally, cell wall formation. Adds enolpyruvyl to UDP-N-acetylglucosamine. The chain is UDP-N-acetylglucosamine 1-carboxyvinyltransferase from Gloeobacter violaceus (strain ATCC 29082 / PCC 7421).